A 182-amino-acid polypeptide reads, in one-letter code: Ferredoxin-thioredoxin reductase subunit A1, chloroplastic (182 aa).

The transit peptide at 1–81 directs the protein to the chloroplast; the sequence is MSSQIALSPA…VAIKSADSIN (81 aa).

It belongs to the ferredoxin thioredoxin reductase alpha subunit family. In terms of assembly, heterodimer of subunit A (variable subunit) and subunit B (catalytic subunit). Heterodimeric FTR forms a complex with ferredoxin and thioredoxin.

The protein localises to the plastid. The protein resides in the chloroplast. In terms of biological role, variable subunit of the ferredoxin-thioredoxin reductase (FTR), which catalyzes the two-electron reduction of thioredoxins by the electrons provided by reduced ferredoxin. The sequence is that of Ferredoxin-thioredoxin reductase subunit A1, chloroplastic from Arabidopsis thaliana (Mouse-ear cress).